A 501-amino-acid chain; its full sequence is Glycerol kinase (501 aa).

An ADP-binding site is contributed by threonine 12. Residues threonine 12, threonine 13, and serine 14 each coordinate ATP. Threonine 12 serves as a coordination point for sn-glycerol 3-phosphate. Arginine 16 provides a ligand contact to ADP. Sn-glycerol 3-phosphate-binding residues include arginine 82, glutamate 83, tyrosine 135, and aspartate 244. The glycerol site is built by arginine 82, glutamate 83, tyrosine 135, aspartate 244, and glutamine 245. Positions 266, 309, 409, and 413 each coordinate ADP. Threonine 266, glycine 309, and glycine 409 together coordinate ATP.

It belongs to the FGGY kinase family.

It catalyses the reaction glycerol + ATP = sn-glycerol 3-phosphate + ADP + H(+). It participates in polyol metabolism; glycerol degradation via glycerol kinase pathway; sn-glycerol 3-phosphate from glycerol: step 1/1. Inhibited by fructose 1,6-bisphosphate (FBP). Its function is as follows. Key enzyme in the regulation of glycerol uptake and metabolism. Catalyzes the phosphorylation of glycerol to yield sn-glycerol 3-phosphate. The chain is Glycerol kinase from Coxiella burnetii (strain RSA 331 / Henzerling II).